A 74-amino-acid polypeptide reads, in one-letter code: Large ribosomal subunit protein uL29 (74 aa).

It belongs to the universal ribosomal protein uL29 family.

This is Large ribosomal subunit protein uL29 from Streptomyces avermitilis (strain ATCC 31267 / DSM 46492 / JCM 5070 / NBRC 14893 / NCIMB 12804 / NRRL 8165 / MA-4680).